Reading from the N-terminus, the 653-residue chain is MPHNSMLKENRLFKPTDEFRRQANISGLETYQALWEFADKDYLTYWSDLARELITWKKPFMHIFDDSEAPFYKWFSDGTLNVSYNCLDRHLPDKADKTALIFESDFGQVQLYTYAKLHNRVCRFANALRELGIKKGDRVIIYLPMLVEAVIAMQACARIGAVHSVVFGGFSASALRDRIEDAEAKLVITANAGLRGGKIIPLKETVDEALEMGCKTIENVIVFHRVNIDTPWKKGRDLWWNELTANQPAFCEPEWMNAEDPLFILYTSGSTGKPKGIVHSTGGYLLGALNSFRNVFDNKPNDIFWCTADVGWITGHSYVCYGPLANGATQVIFEGVPTYPDPGRIWRMIQRHKINVFYTSPTLIRSLTRLGDHIPNKYDLSSLRLLGSVGEPINPSAWMWFYEVVGKSRCPIVDTWWQTETGSIMLAPIPGVTATKPGSCTLPLPGIMAEVLDENGQKCAVEQGGALAIKRPFPSMLRTIWNDPERYKSTYFPAEYGGKYYIAGDNAHRDKDGYFWILGRTDDVLNVSGHRLGTMEIESALVASPKVAEAAVVGKPDEIKGEAIVAFVVLNDFRPEGEEARQLAEELKAWVSNEIGKIARPEDIRFADNLPKTRSGKIMRRLLRSIAKNEMITQDISTLENPQIIGQLQQQWL.

CoA contacts are provided by residues 195–198 and Thr314; that span reads RGGK. Residues 390–392, 414–419, Asp505, and Arg520 each bind ATP; these read GEP and DTWWQT. Ser528 lines the CoA pocket. Arg531 is an ATP binding site. Mg(2+)-binding residues include Val542 and Val547. Lys617 bears the N6-acetyllysine mark.

Belongs to the ATP-dependent AMP-binding enzyme family. Mg(2+) is required as a cofactor. Post-translationally, acetylated. Deacetylation by the SIR2-homolog deacetylase activates the enzyme.

The catalysed reaction is acetate + ATP + CoA = acetyl-CoA + AMP + diphosphate. Its function is as follows. Catalyzes the conversion of acetate into acetyl-CoA (AcCoA), an essential intermediate at the junction of anabolic and catabolic pathways. AcsA undergoes a two-step reaction. In the first half reaction, AcsA combines acetate with ATP to form acetyl-adenylate (AcAMP) intermediate. In the second half reaction, it can then transfer the acetyl group from AcAMP to the sulfhydryl group of CoA, forming the product AcCoA. The chain is Acetyl-coenzyme A synthetase from Pasteurella multocida (strain Pm70).